A 63-amino-acid polypeptide reads, in one-letter code: Large ribosomal subunit protein bL28 (63 aa).

Belongs to the bacterial ribosomal protein bL28 family.

The chain is Large ribosomal subunit protein bL28 from Clostridium novyi (strain NT).